A 500-amino-acid chain; its full sequence is Ent-cassadiene C11-alpha-hydroxylase 1 (500 aa).

The helical transmembrane segment at 4–24 threads the bilayer; the sequence is SQVWLLWGALSVAVLFYLSTL. Cysteine 442 contributes to the heme binding site.

Belongs to the cytochrome P450 family. Heme is required as a cofactor.

The protein resides in the membrane. It carries out the reaction ent-cassa-12,15-diene + reduced [NADPH--hemoprotein reductase] + O2 = ent-11beta-hydroxycassa-12,15-diene + oxidized [NADPH--hemoprotein reductase] + H2O + H(+). In terms of biological role, enzyme of the diterpenoid metabolism involved in the biosynthesis of antibacterial oryzalides such as phytocassane. Can use ent-cassadiene as substrate, but not C11-alpha-hydroxy-ent-cassadiene, ent-pimaradiene, ent-sandaracopimaradiene, ent-kaurene, ent-isokaurene, syn-pimaradiene, syn-stemarene, syn-stemodene. The polypeptide is Ent-cassadiene C11-alpha-hydroxylase 1 (Oryza sativa subsp. japonica (Rice)).